The primary structure comprises 218 residues: N-(5'-phosphoribosyl)anthranilate isomerase (218 aa).

This sequence belongs to the TrpF family.

The catalysed reaction is N-(5-phospho-beta-D-ribosyl)anthranilate = 1-(2-carboxyphenylamino)-1-deoxy-D-ribulose 5-phosphate. The protein operates within amino-acid biosynthesis; L-tryptophan biosynthesis; L-tryptophan from chorismate: step 3/5. This is N-(5'-phosphoribosyl)anthranilate isomerase from Bacillus licheniformis (strain ATCC 14580 / DSM 13 / JCM 2505 / CCUG 7422 / NBRC 12200 / NCIMB 9375 / NCTC 10341 / NRRL NRS-1264 / Gibson 46).